The primary structure comprises 361 residues: Probable galacturonosyltransferase-like 7 (361 aa).

Residues 1–21 traverse the membrane as a helical; Signal-anchor for type II membrane protein segment; that stretch reads MLWIMRFSGLFSAALVIIVLS. Residues 22–361 lie on the Lumenal side of the membrane; it reads PSLQSFPPAE…PYDLYGHYSR (340 aa). N-linked (GlcNAc...) asparagine glycosylation is present at asparagine 217.

It belongs to the glycosyltransferase 8 family.

The protein localises to the golgi apparatus membrane. The protein operates within glycan metabolism; pectin biosynthesis. Functionally, may be involved in pectin and/or xylans biosynthesis in cell walls. The chain is Probable galacturonosyltransferase-like 7 (GATL7) from Arabidopsis thaliana (Mouse-ear cress).